A 172-amino-acid polypeptide reads, in one-letter code: Translation initiation factor IF-3 (172 aa).

Belongs to the IF-3 family. In terms of assembly, monomer.

The protein resides in the cytoplasm. Its function is as follows. IF-3 binds to the 30S ribosomal subunit and shifts the equilibrium between 70S ribosomes and their 50S and 30S subunits in favor of the free subunits, thus enhancing the availability of 30S subunits on which protein synthesis initiation begins. In Bartonella quintana (strain Toulouse) (Rochalimaea quintana), this protein is Translation initiation factor IF-3.